Consider the following 173-residue polypeptide: Aliphatic sulfonate oxidoreductase, polyferredoxin-like subunit (173 aa).

3 consecutive 4Fe-4S ferredoxin-type domains span residues 9–40 (IWIL…WPEA), 48–80 (LFPG…VDEK), and 82–111 (GAVV…IPAG). [4Fe-4S] cluster is bound by residues cysteine 18, cysteine 21, cysteine 24, cysteine 28, cysteine 58, cysteine 61, cysteine 66, cysteine 70, cysteine 91, cysteine 94, cysteine 97, cysteine 101, cysteine 118, cysteine 121, cysteine 127, and cysteine 131.

Heterodimer composed of a small WOR5-S subunit, with four [4Fe-4S] clusters, and a large WOR5-L subunit, containing the active site tungsto-bispyranopterin cofactor as well as another [4Fe-4S] cluster. The cofactor is [4Fe-4S] cluster.

It localises to the cytoplasm. In terms of biological role, polyferredoxin-like subunit of an oxidoreductase that can desulfonate and oxidize aliphatic sulfonates such as taurine. May serve as a an electron-transfer subunit between the catalytic subunit and ferredoxin. This Pyrococcus furiosus (strain ATCC 43587 / DSM 3638 / JCM 8422 / Vc1) protein is Aliphatic sulfonate oxidoreductase, polyferredoxin-like subunit.